The primary structure comprises 217 residues: Putative thymidylate synthase (217 aa).

Residue Cys-139 is part of the active site.

The protein belongs to the thymidylate synthase family. Archaeal-type ThyA subfamily. In terms of assembly, monomer.

The protein resides in the cytoplasm. Its pathway is pyrimidine metabolism; dTTP biosynthesis. Its function is as follows. May catalyze the biosynthesis of dTMP using an unknown cosubstrate. This is Putative thymidylate synthase from Methanosarcina acetivorans (strain ATCC 35395 / DSM 2834 / JCM 12185 / C2A).